A 216-amino-acid chain; its full sequence is uncharacterized protein (216 aa).

This is an uncharacterized protein from Saccharomyces cerevisiae (strain ATCC 204508 / S288c) (Baker's yeast).